The following is a 966-amino-acid chain: Probable LIM domain-containing serine/threonine-protein kinase DDB_G0286997 (966 aa).

2 LIM zinc-binding domains span residues 3–62 and 63–120; these read SRCG…LNAP and KCFK…KPPP. Disordered stretches follow at residues 208–291 and 331–588; these read YSLS…PTED and PLNQ…EQQV. Over residues 211 to 231 the composition is skewed to low complexity; it reads SSPSSSSSSSSSSSSSSSSPP. The span at 232–269 shows a compositional bias: polar residues; the sequence is NTFNKSSDFLRNPLNNNVKSSSSSIGGNFVNKSQQQQQ. 2 stretches are compositionally biased toward low complexity: residues 270–284 and 331–350; these read PIDS…ISPS and PLNQ…SPNL. The segment covering 374 to 389 has biased composition (polar residues); that stretch reads TTTFSNPLLKTKNQSF. Positions 419 to 430 are enriched in pro residues; sequence PLPPPPITPIPS. Low complexity predominate over residues 431–449; the sequence is PSSSSIIINNQQQQQQESQ. The segment covering 490-511 has biased composition (pro residues); the sequence is KPIVLPPPPLDMEQLPLPPPPL. Polar residues predominate over residues 513–526; sequence SSQINQSLKSTQHN. Low complexity predominate over residues 543–560; sequence IQKQSIPTRKPQLPQSSN. Positions 561–570 are enriched in pro residues; it reads PSPPSPPSPQ. The 258-residue stretch at 702-959 folds into the Protein kinase domain; it reads VIFGDVIAAG…DTLKKISESL (258 aa). Residues 708 to 716 and Lys-729 each bind ATP; that span reads IAAGASGKV. Asp-825 functions as the Proton acceptor in the catalytic mechanism.

The protein belongs to the protein kinase superfamily. TKL Ser/Thr protein kinase family.

The catalysed reaction is L-seryl-[protein] + ATP = O-phospho-L-seryl-[protein] + ADP + H(+). It catalyses the reaction L-threonyl-[protein] + ATP = O-phospho-L-threonyl-[protein] + ADP + H(+). The sequence is that of Probable LIM domain-containing serine/threonine-protein kinase DDB_G0286997 from Dictyostelium discoideum (Social amoeba).